The following is a 307-amino-acid chain: Methionyl-tRNA formyltransferase (307 aa).

110–113 (SLLP) is a (6S)-5,6,7,8-tetrahydrofolate binding site.

It belongs to the Fmt family.

The catalysed reaction is L-methionyl-tRNA(fMet) + (6R)-10-formyltetrahydrofolate = N-formyl-L-methionyl-tRNA(fMet) + (6S)-5,6,7,8-tetrahydrofolate + H(+). Attaches a formyl group to the free amino group of methionyl-tRNA(fMet). The formyl group appears to play a dual role in the initiator identity of N-formylmethionyl-tRNA by promoting its recognition by IF2 and preventing the misappropriation of this tRNA by the elongation apparatus. This Chromobacterium violaceum (strain ATCC 12472 / DSM 30191 / JCM 1249 / CCUG 213 / NBRC 12614 / NCIMB 9131 / NCTC 9757 / MK) protein is Methionyl-tRNA formyltransferase.